A 425-amino-acid polypeptide reads, in one-letter code: Amidase 1 (425 aa).

N-acetylalanine is present on Ala2. Active-site charge relay system residues include Lys36 and Ser113. The active-site Acyl-ester intermediate is the Ser137.

It belongs to the amidase family. Expressed in cotyledons, leaves and flower buds. Lower levels in roots, stems and siliques.

Its subcellular location is the cytoplasm. The protein resides in the nucleus. The protein localises to the nucleoplasm. It carries out the reaction a monocarboxylic acid amide + H2O = a monocarboxylate + NH4(+). The catalysed reaction is indole-3-acetamide + H2O = (indol-3-yl)acetate + NH4(+). The enzyme catalyses 2-phenylacetamide + H2O = 2-phenylacetate + NH4(+). It catalyses the reaction L-asparagine + H2O = L-aspartate + NH4(+). It carries out the reaction 1-naphthaleneacetamide + H2O = 1-naphthaleneacetate + NH4(+). Inhibited by phenylmethylsulfonyl fluoride (PMSF). In terms of biological role, amidase involved in auxin biosynthesis. Converts indole-3-acetamide to indole-3-acetate. Converts phenyl-2-acetamide (PAM) to phenyl-2-acetate. Substrate preference is PAM &gt; IAM. Can also use L-asparagine and 1-naphtalene-acetamide as substrates, but not indole-3-acetonitrile or indole-3-acetyl-L-aspartic acid. The polypeptide is Amidase 1 (Arabidopsis thaliana (Mouse-ear cress)).